A 38-amino-acid chain; its full sequence is Photosystem II reaction center protein T (38 aa).

The helical transmembrane segment at 3 to 23 (ALVYTFLLVSTLGIIFFAIFF) threads the bilayer.

This sequence belongs to the PsbT family. As to quaternary structure, PSII is composed of 1 copy each of membrane proteins PsbA, PsbB, PsbC, PsbD, PsbE, PsbF, PsbH, PsbI, PsbJ, PsbK, PsbL, PsbM, PsbT, PsbY, PsbZ, Psb30/Ycf12, at least 3 peripheral proteins of the oxygen-evolving complex and a large number of cofactors. It forms dimeric complexes.

The protein localises to the plastid. It localises to the chloroplast thylakoid membrane. Functionally, found at the monomer-monomer interface of the photosystem II (PS II) dimer, plays a role in assembly and dimerization of PSII. PSII is a light-driven water plastoquinone oxidoreductase, using light energy to abstract electrons from H(2)O, generating a proton gradient subsequently used for ATP formation. This is Photosystem II reaction center protein T from Secale cereale (Rye).